Reading from the N-terminus, the 848-residue chain is F-BAR domain only protein 2 (848 aa).

The region spanning 4–250 is the F-BAR domain; the sequence is PYFLENFWGN…NMENTSVESL (247 aa). A coiled-coil region spans residues 87–114; it reads HMELVRKLQELIKEVQKYVDEQAKNHKK. Disordered stretches follow at residues 292-316 and 404-526; these read IPGR…NASN and LSPT…RAES. Phosphoserine is present on residues S405 and S417. Over residues 445 to 460 the composition is skewed to low complexity; sequence PFGPTSTGSSSSLPQS. The region spanning 580–848 is the MHD domain; it reads ALPIAVAFTE…FATGRYMADC (269 aa).

It belongs to the FCHO family. In terms of assembly, homodimer.

It is found in the membrane. The protein localises to the clathrin-coated pit. May function in an early step of clathrin-mediated endocytosis. The protein is F-BAR domain only protein 2 (fcho2) of Danio rerio (Zebrafish).